A 98-amino-acid polypeptide reads, in one-letter code: NADH-ubiquinone oxidoreductase chain 4L (98 aa).

A run of 3 helical transmembrane segments spans residues M1–M21, S29–L49, and I61–V81.

Belongs to the complex I subunit 4L family. In terms of assembly, core subunit of respiratory chain NADH dehydrogenase (Complex I) which is composed of 45 different subunits.

It is found in the mitochondrion inner membrane. It carries out the reaction a ubiquinone + NADH + 5 H(+)(in) = a ubiquinol + NAD(+) + 4 H(+)(out). In terms of biological role, core subunit of the mitochondrial membrane respiratory chain NADH dehydrogenase (Complex I) which catalyzes electron transfer from NADH through the respiratory chain, using ubiquinone as an electron acceptor. Part of the enzyme membrane arm which is embedded in the lipid bilayer and involved in proton translocation. This Neomonachus schauinslandi (Hawaiian monk seal) protein is NADH-ubiquinone oxidoreductase chain 4L (MT-ND4L).